The chain runs to 451 residues: uncharacterized protein (451 aa).

It to ORF5 in pFZ1.

This is an uncharacterized protein from Methanothermobacter thermautotrophicus (Methanobacterium thermoformicicum).